Here is a 129-residue protein sequence, read N- to C-terminus: M-zodatoxin-Lt8d (129 aa).

Residues 1 to 20 (MKYFVVALALVAAFACIAES) form the signal peptide. The propeptide occupies 21-60 (KPAESEHELAEVEEENELADLEDAVWLEHLADLSDLEEAR). The Processing quadruplet motif motif lies at 57 to 60 (EEAR).

Post-translationally, cleavage of the propeptide depends on the processing quadruplet motif (XXXR, with at least one of X being E). As to expression, expressed by the venom gland.

The protein resides in the secreted. Its function is as follows. Insecticidal, cytolytic and antimicrobial peptide. Forms voltage-dependent, ion-permeable channels in membranes. At high concentration causes cell membrane lysis. This chain is M-zodatoxin-Lt8d (cit 1-4), found in Lachesana tarabaevi (Spider).